We begin with the raw amino-acid sequence, 433 residues long: GTPase Obg (433 aa).

In terms of domain architecture, Obg spans 1–158 (MFVDQVKIYV…RNVILELKLL (158 aa)). An OBG-type G domain is found at 159-329 (ADVGLVGFPS…LLFAIADLLE (171 aa)). Residues 165 to 172 (GFPSVGKS), 190 to 194 (FTTLV), 212 to 215 (DLPG), 282 to 285 (NKMD), and 310 to 312 (SAA) contribute to the GTP site. Serine 172 and threonine 192 together coordinate Mg(2+). Positions 350-428 (KYEKEELPFT…LLDYEFEFVD (79 aa)) constitute an OCT domain.

This sequence belongs to the TRAFAC class OBG-HflX-like GTPase superfamily. OBG GTPase family. In terms of assembly, monomer. Requires Mg(2+) as cofactor.

It is found in the cytoplasm. An essential GTPase which binds GTP, GDP and possibly (p)ppGpp with moderate affinity, with high nucleotide exchange rates and a fairly low GTP hydrolysis rate. Plays a role in control of the cell cycle, stress response, ribosome biogenesis and in those bacteria that undergo differentiation, in morphogenesis control. The chain is GTPase Obg from Geobacillus thermodenitrificans (strain NG80-2).